Here is a 384-residue protein sequence, read N- to C-terminus: Guanine nucleotide-binding protein alpha-1 subunit (384 aa).

The disordered stretch occupies residues 1–22 (MGSLCSRNKHYSQADDEENTQT). Residue glycine 2 is the site of N-myristoyl glycine attachment. Residue cysteine 5 is the site of S-palmitoyl cysteine attachment. The G-alpha domain maps to 38 to 384 (HIQKLLLLGA…RRNLFEAGLL (347 aa)). A G1 motif region spans residues 41-54 (KLLLLGAGDSGKST). GTP-binding residues include aspartate 49, serine 50, glycine 51, lysine 52, serine 53, threonine 54, aspartate 163, leucine 188, threonine 194, glycine 222, asparagine 288, lysine 289, aspartate 291, and alanine 356. Residue serine 53 coordinates Mg(2+). Residues 186-194 (DVLFARIRT) form a G2 motif region. Threonine 194 serves as a coordination point for Mg(2+). The tract at residues 215-224 (YRLFDVGGQR) is G3 motif. A G4 motif region spans residues 284–291 (MLFLNKFD). The G5 motif stretch occupies residues 354–359 (TTALDQ).

Belongs to the G-alpha family. In terms of assembly, g proteins are composed of 3 units; alpha, beta and gamma. The alpha chain contains the guanine nucleotide binding site. Mg(2+) serves as cofactor.

Functionally, guanine nucleotide-binding proteins (G proteins) are involved as modulators or transducers in various transmembrane signaling systems. The sequence is that of Guanine nucleotide-binding protein alpha-1 subunit (GPA1) from Solanum lycopersicum (Tomato).